A 221-amino-acid polypeptide reads, in one-letter code: Nuclear phosphoprotein UL3 homolog (221 aa).

The protein belongs to the alphaherpesvirinae HHV-1 UL3 family. In terms of processing, phosphorylated.

Its subcellular location is the host nucleus. This Varicella-zoster virus (strain Oka vaccine) (HHV-3) protein is Nuclear phosphoprotein UL3 homolog.